Consider the following 461-residue polypeptide: Bifunctional protein GlmU (461 aa).

Positions 1 to 232 are pyrophosphorylase; that stretch reads MNLQIIILAA…SFEVQGINNR (232 aa). Residues 8–11, Lys22, Gln73, and 78–79 contribute to the UDP-N-acetyl-alpha-D-glucosamine site; these read LAAG and GT. Asp102 serves as a coordination point for Mg(2+). Gly142, Glu157, and Asn230 together coordinate UDP-N-acetyl-alpha-D-glucosamine. Asn230 provides a ligand contact to Mg(2+). A linker region spans residues 233–253; that stretch reads QQLQQLERIWQQRAANQLMEK. Positions 254 to 461 are N-acetyltransferase; that stretch reads GATLADANRF…WKRPVKRERD (208 aa). 2 residues coordinate UDP-N-acetyl-alpha-D-glucosamine: Arg336 and Lys354. Catalysis depends on His366, which acts as the Proton acceptor. Positions 369 and 380 each coordinate UDP-N-acetyl-alpha-D-glucosamine. Residues Ala383, 389–390, Ser408, and Ala426 contribute to the acetyl-CoA site; that span reads NY.

The protein in the N-terminal section; belongs to the N-acetylglucosamine-1-phosphate uridyltransferase family. In the C-terminal section; belongs to the transferase hexapeptide repeat family. In terms of assembly, homotrimer. Requires Mg(2+) as cofactor.

Its subcellular location is the cytoplasm. It carries out the reaction alpha-D-glucosamine 1-phosphate + acetyl-CoA = N-acetyl-alpha-D-glucosamine 1-phosphate + CoA + H(+). The catalysed reaction is N-acetyl-alpha-D-glucosamine 1-phosphate + UTP + H(+) = UDP-N-acetyl-alpha-D-glucosamine + diphosphate. Its pathway is nucleotide-sugar biosynthesis; UDP-N-acetyl-alpha-D-glucosamine biosynthesis; N-acetyl-alpha-D-glucosamine 1-phosphate from alpha-D-glucosamine 6-phosphate (route II): step 2/2. It functions in the pathway nucleotide-sugar biosynthesis; UDP-N-acetyl-alpha-D-glucosamine biosynthesis; UDP-N-acetyl-alpha-D-glucosamine from N-acetyl-alpha-D-glucosamine 1-phosphate: step 1/1. It participates in bacterial outer membrane biogenesis; LPS lipid A biosynthesis. Catalyzes the last two sequential reactions in the de novo biosynthetic pathway for UDP-N-acetylglucosamine (UDP-GlcNAc). The C-terminal domain catalyzes the transfer of acetyl group from acetyl coenzyme A to glucosamine-1-phosphate (GlcN-1-P) to produce N-acetylglucosamine-1-phosphate (GlcNAc-1-P), which is converted into UDP-GlcNAc by the transfer of uridine 5-monophosphate (from uridine 5-triphosphate), a reaction catalyzed by the N-terminal domain. This chain is Bifunctional protein GlmU, found in Legionella pneumophila (strain Corby).